A 181-amino-acid chain; its full sequence is Peptide methionine sulfoxide reductase MsrA (181 aa).

Cysteine 14 is an active-site residue.

This sequence belongs to the MsrA Met sulfoxide reductase family.

It catalyses the reaction L-methionyl-[protein] + [thioredoxin]-disulfide + H2O = L-methionyl-(S)-S-oxide-[protein] + [thioredoxin]-dithiol. It carries out the reaction [thioredoxin]-disulfide + L-methionine + H2O = L-methionine (S)-S-oxide + [thioredoxin]-dithiol. Has an important function as a repair enzyme for proteins that have been inactivated by oxidation. Catalyzes the reversible oxidation-reduction of methionine sulfoxide in proteins to methionine. This chain is Peptide methionine sulfoxide reductase MsrA, found in Bacillus licheniformis (strain ATCC 14580 / DSM 13 / JCM 2505 / CCUG 7422 / NBRC 12200 / NCIMB 9375 / NCTC 10341 / NRRL NRS-1264 / Gibson 46).